We begin with the raw amino-acid sequence, 322 residues long: uncharacterized protein (322 aa).

8 consecutive transmembrane segments (helical) span residues isoleucine 7–isoleucine 27, alanine 54–phenylalanine 74, phenylalanine 87–serine 107, isoleucine 128–valine 148, phenylalanine 162–isoleucine 182, isoleucine 209–glycine 229, glycine 249–leucine 269, and valine 287–leucine 307.

It to E.coli YbhN.

It is found in the cell membrane. This is an uncharacterized protein from Synechocystis sp. (strain ATCC 27184 / PCC 6803 / Kazusa).